Here is a 284-residue protein sequence, read N- to C-terminus: MAIIMDGKALAVNMQEQLQEKVARLKEKEWIVPGLVVIMVGENPASQVYVRNKERAAKKAGFHSKTVNLSESISEEELIEVIEKYNQNPLFHGILVQLPLPNHINEMRILLAIDPKKDVDGFHPMNTGNLWNGRPQMVPCTPAGIMEILREYNVELEGKTAVIIGRSNIVGKPMAQLLLEKNATVTLTHSRTPHLAKVCNKADVLIVAIGRAKFVTEEFVKEGAVVIDVGINRDEEGKLCGDVDFDQVKEKVSMITPVPGGVGPMTITMLMEQTYQAALRSLKG.

Residues 165–167, Ser-190, and Ile-231 contribute to the NADP(+) site; that span reads GRS.

The protein belongs to the tetrahydrofolate dehydrogenase/cyclohydrolase family. Homodimer.

It catalyses the reaction (6R)-5,10-methylene-5,6,7,8-tetrahydrofolate + NADP(+) = (6R)-5,10-methenyltetrahydrofolate + NADPH. The catalysed reaction is (6R)-5,10-methenyltetrahydrofolate + H2O = (6R)-10-formyltetrahydrofolate + H(+). It functions in the pathway one-carbon metabolism; tetrahydrofolate interconversion. Catalyzes the oxidation of 5,10-methylenetetrahydrofolate to 5,10-methenyltetrahydrofolate and then the hydrolysis of 5,10-methenyltetrahydrofolate to 10-formyltetrahydrofolate. This chain is Bifunctional protein FolD, found in Streptococcus thermophilus (strain CNRZ 1066).